The sequence spans 300 residues: ClpXP adapter protein SpxH (300 aa).

The protein belongs to the SpxH family. In terms of assembly, interacts with Spx.

The protein resides in the cytoplasm. In terms of biological role, adapter protein required for efficient degradation of Spx by ClpXP under non-stress conditions. Interaction with Spx stabilizes Spx and exposes the C-terminus of Spx for recognition and proteolysis by ClpXP. In Bacillus licheniformis (strain ATCC 14580 / DSM 13 / JCM 2505 / CCUG 7422 / NBRC 12200 / NCIMB 9375 / NCTC 10341 / NRRL NRS-1264 / Gibson 46), this protein is ClpXP adapter protein SpxH.